The chain runs to 278 residues: Probable endonuclease 4 (278 aa).

Positions 69, 109, 145, 179, 182, 216, 229, 231, and 261 each coordinate Zn(2+).

This sequence belongs to the AP endonuclease 2 family. It depends on Zn(2+) as a cofactor.

The enzyme catalyses Endonucleolytic cleavage to 5'-phosphooligonucleotide end-products.. Its function is as follows. Endonuclease IV plays a role in DNA repair. It cleaves phosphodiester bonds at apurinic or apyrimidinic (AP) sites, generating a 3'-hydroxyl group and a 5'-terminal sugar phosphate. The protein is Probable endonuclease 4 of Buchnera aphidicola subsp. Baizongia pistaciae (strain Bp).